The following is a 695-amino-acid chain: MSSSDKIPSLFGDDDALAPVPAAPFKASVEPRVEPTPRPIPPPPPSKTASAPGEYSAADIEVLEGLEPVRKRPGMYIGGTDERALHHLFAEVLDNSMDEAVAGFAKTIEVKLDADGFLSVKDDGRGMPVDPHPKYPGKSALEVIMTVLHAGGKFTGKAYETSGGLHGVGASVVNALSERVEVTVWRDGFEHLQVFSRGKPLGPIQQVAPSKKKGTMVRFKPDDEIFGEGTNFKPARLYRMARSKAYLFRGVQIKWSCDPSRIHDQTPPEATFHFPNGLADFLAERTKGLTTITPESFAGRIERQGEAGAVEWAVTWTPQGFGEHDGFMQSYCNTVPTPEGGTHESGFRAALTRGLKAYAELKGEKRGTIITADDVVAQAGALISVFIKNPEFQGQTKEKLSTSEAQRFVEASLRDPFDLWLSSSPKNAQALLEFVIERAEERLKRRKDKEVSRASATRKLRLPGKLADCAGSAVDGAELFIVEGDSAGGSAKQARDRKYQAILPLRGKILNVASASGEKFTANKELSDLMLALGAQAGAKYREEDLRYERIIIMTDADVDGAHIASLLITFFYRTMPELIRGGHLFLALPPLYRLAHGGKSEYARDDAHKEELLATVFKGKKPEIGRFKGLGEMMASQLKETTMDPKKRTLARVTLPRHEESVEDLVETLMGRKPELRFRFIQENAEFASADLDL.

The tract at residues Met-1–Gly-53 is disordered. Residues Thr-36–Ser-46 are compositionally biased toward pro residues. Residues Tyr-55, Asn-95, Asp-122, Gly-164–Ala-170, and Lys-397 each bind ATP. The region spanning Ala-477–Pro-591 is the Toprim domain. Mg(2+) is bound by residues Glu-483, Asp-556, and Asp-558.

The protein belongs to the type II topoisomerase family. ParE type 1 subfamily. Heterotetramer composed of ParC and ParE. Requires Mg(2+) as cofactor. The cofactor is Mn(2+). Ca(2+) is required as a cofactor.

The catalysed reaction is ATP-dependent breakage, passage and rejoining of double-stranded DNA.. Its function is as follows. Topoisomerase IV is essential for chromosome segregation. It relaxes supercoiled DNA. Performs the decatenation events required during the replication of a circular DNA molecule. The sequence is that of DNA topoisomerase 4 subunit B from Caulobacter vibrioides (strain ATCC 19089 / CIP 103742 / CB 15) (Caulobacter crescentus).